The sequence spans 334 residues: H-2 class I histocompatibility antigen, Q7 alpha chain (334 aa).

A signal peptide spans 1–21 (MALTMLLLLVAAALTLIETRA). The segment at 22–111 (GQHSLQYFHT…AQSYYNQSKG (90 aa)) is alpha-1. Residues 22-310 (GQHSLQYFHT…PPYTVSNMAT (289 aa)) lie on the Extracellular side of the membrane. Asn-107 carries N-linked (GlcNAc...) asparagine glycosylation. Positions 112–203 (GSHTLQWMYG…QLGKETLLRT (92 aa)) are alpha-2. 2 disulfides stabilise this stretch: Cys-122–Cys-185 and Cys-224–Cys-280. An alpha-3 region spans residues 204–295 (DPPKAHVTHH…GLPEPLTLRW (92 aa)). Positions 206-294 (PKAHVTHHPR…EGLPEPLTLR (89 aa)) constitute an Ig-like C1-type domain. Asn-277 carries N-linked (GlcNAc...) asparagine glycosylation. The connecting peptide stretch occupies residues 296–310 (GRWEPPPYTVSNMAT). A helical membrane pass occupies residues 311 to 332 (IAVVVDLGAVAIIGAVVAFVMN).

It belongs to the MHC class I family. As to quaternary structure, heterodimer of an alpha chain and a beta chain (beta-2-microglobulin).

The protein localises to the membrane. Functionally, involved in the presentation of foreign antigens to the immune system. In Mus musculus (Mouse), this protein is H-2 class I histocompatibility antigen, Q7 alpha chain (H2-Q7).